Reading from the N-terminus, the 109-residue chain is Large ribosomal subunit protein uL23 (109 aa).

Belongs to the universal ribosomal protein uL23 family. As to quaternary structure, part of the 50S ribosomal subunit. Contacts protein L29, and trigger factor when it is bound to the ribosome.

In terms of biological role, one of the early assembly proteins it binds 23S rRNA. One of the proteins that surrounds the polypeptide exit tunnel on the outside of the ribosome. Forms the main docking site for trigger factor binding to the ribosome. This is Large ribosomal subunit protein uL23 from Haemophilus influenzae (strain PittEE).